We begin with the raw amino-acid sequence, 209 residues long: Uracil phosphoribosyltransferase (209 aa).

Residues Arg79, Arg104, and 131–139 (DPMLATGGS) contribute to the 5-phospho-alpha-D-ribose 1-diphosphate site. Uracil-binding positions include Ile194 and 199 to 201 (GDA). Asp200 serves as a coordination point for 5-phospho-alpha-D-ribose 1-diphosphate.

It belongs to the UPRTase family. Mg(2+) is required as a cofactor.

The catalysed reaction is UMP + diphosphate = 5-phospho-alpha-D-ribose 1-diphosphate + uracil. The protein operates within pyrimidine metabolism; UMP biosynthesis via salvage pathway; UMP from uracil: step 1/1. Allosterically activated by GTP. Its function is as follows. Catalyzes the conversion of uracil and 5-phospho-alpha-D-ribose 1-diphosphate (PRPP) to UMP and diphosphate. The chain is Uracil phosphoribosyltransferase from Lactiplantibacillus plantarum (strain ATCC BAA-793 / NCIMB 8826 / WCFS1) (Lactobacillus plantarum).